Consider the following 370-residue polypeptide: MMSFNDYIFYEYLKKTNWNIHNLYCNLTQTADNILNFEIPSGVSCQLSSLTSSNFASGCKISAMPILNGSMSYVYTNVNLENLNRNITYNLQHFYEGYKHVDVPFVHYVNEFQDKKLPLRPTLLYGRMHLPSQHLDAIFATRLSPWLLFFIQGVNEIEDGVGDNLCFNWQYDTGKRCLEFVYESSGAMLGVRGLWNLNYRELNTKINMENKAPSNMRWSLGFETYYGVLTKCAGASLGMRLHSGPSHPYAPFILTCTLNPIVGHITSTFSTAEPRTKAFSAQYDFNIYSYESQLKLGIELWRSKQEMSQSTNDPTANSMSSLLKGTCSTSGDVSISWQARIRNFLLTIGTEAQLTKIDPLFFGVHFEYSK.

This sequence belongs to the MDM10 family. Component of the ER-mitochondria encounter structure (ERMES) or MDM complex, composed of mmm1, mdm10, mdm12 and mdm34. Associates with the mitochondrial outer membrane sorting assembly machinery SAM(core) complex.

The protein localises to the mitochondrion outer membrane. In terms of biological role, component of the ERMES/MDM complex, which serves as a molecular tether to connect the endoplasmic reticulum and mitochondria. Components of this complex are involved in the control of mitochondrial shape and protein biogenesis and may function in phospholipid exchange. mdm10 is involved in the late assembly steps of the general translocase of the mitochondrial outer membrane (TOM complex). Functions in the tom40-specific route of the assembly of outer membrane beta-barrel proteins, including the association of tom40 with the receptor tom22 and small TOM proteins. Can associate with the SAM(core) complex as well as the mdm12-mmm1 complex, both involved in late steps of the major beta-barrel assembly pathway, that is responsible for biogenesis of all outer membrane beta-barrel proteins. May act as a switch that shuttles between both complexes and channels precursor proteins into the tom40-specific pathway. Plays a role in mitochondrial morphology and in the inheritance of mitochondria. This Schizosaccharomyces pombe (strain 972 / ATCC 24843) (Fission yeast) protein is Mitochondrial distribution and morphology protein 10 (mdm10).